The sequence spans 1630 residues: Transient receptor potential cation channel subfamily M member 1 (1630 aa).

Disordered stretches follow at residues 1–25, 65–92, 453–492, 620–643, and 824–858; these read MGSMRKMSSSFKRGSIKSSTSGSQK, PLPSVTPSSTAEDTKQGDAQSGKWSVSK, APPVDTKVAEKEKKPPTATTKGRGKGKGKKKGKVKEEVEE, LGMEDDEPPAKGKKKKKKKKEEEI, and SKENEDGKEKEEENVDANADAGSRKGDEENEHKKQ. Topologically, residues 1-877 are cytoplasmic; the sequence is MGSMRKMSSS…CEFYNAPIVK (877 aa). A compositionally biased stretch (low complexity) spans 8–25; sequence SSSFKRGSIKSSTSGSQK. Residues 69 to 92 are compositionally biased toward polar residues; it reads VTPSSTAEDTKQGDAQSGKWSVSK. Residues 474-485 show a composition bias toward basic residues; sequence GRGKGKGKKKGK. 2 stretches are compositionally biased toward basic and acidic residues: residues 825–834 and 845–855; these read KENEDGKEKE and GSRKGDEENEH. The helical transmembrane segment at 878-898 threads the bilayer; sequence FWFYTISYLGYLLLFNYVILV. At 899–944 the chain is on the extracellular side; it reads RMDGWPSPQEWIVISYIVSLALEKIREILMSEPGKLSQKIKVWLQE. Residues 945–965 traverse the membrane as a helical segment; sequence YWNITDLVAISMFMVGAILRL. The Cytoplasmic portion of the chain corresponds to 966-975; that stretch reads QNQPYMGYGR. A helical membrane pass occupies residues 976 to 996; sequence VIYCVDIILWYIRVLDIFGVN. The Extracellular portion of the chain corresponds to 997 to 1008; sequence KYLGPYVMMIGK. The helical transmembrane segment at 1009 to 1029 threads the bilayer; that stretch reads MMIDMLYFVVIMLVVLMSFGV. Topologically, residues 1030–1107 are cytoplasmic; it reads ARQAILHPEE…CIPGAWLTPA (78 aa). The chain crosses the membrane as a helical span at residues 1108 to 1128; it reads LMACYLLVANILLVNLLIAVF. Asn1129 carries an N-linked (GlcNAc...) asparagine glycan. Residues 1129 to 1158 lie on the Extracellular side of the membrane; the sequence is NNTFFEVKSISNQVWKFQRYQLIMTFHDRP. Residues 1159-1179 form a helical membrane-spanning segment; it reads VLPPPMIILSHIYIIVMRLSG. Over 1180 to 1630 the chain is Cytoplasmic; it reads RCRKKREGDQ…QEKGNPETEC (451 aa). A coiled-coil region spans residues 1235–1255; sequence IRVTSERVENMSMRLEEINER. Disordered regions lie at residues 1362 to 1414 and 1575 to 1630; these read EDVK…AGEL and CLRS…ETEC.

The protein belongs to the transient receptor (TC 1.A.4) family. LTrpC subfamily. TRPM1 sub-subfamily. In terms of assembly, interacts with TRPM3; the interaction results in the formation of a heteromultimeric cation channel complex that are functionally different from the homomeric channels. Interacts with GPR179. Associates with both guanine nucleotide-binding proteins G(o) and beta-gamma G protein dimer; implicated in directly regulating TRPM1 channel open-state.

It localises to the cell membrane. The protein resides in the endoplasmic reticulum membrane. It is found in the cell projection. The protein localises to the axon. It catalyses the reaction Ca(2+)(in) = Ca(2+)(out). The enzyme catalyses Mg(2+)(in) = Mg(2+)(out). The catalysed reaction is Mn(2+)(in) = Mn(2+)(out). It carries out the reaction Ni(2+)(in) = Ni(2+)(out). Inhibited by extracellular zinc ions. Inhibited by intracellular Mg(2+). Activated by the neuroactive steroid pregnenolone sulfate. Negatively regulated by activation of GRM6 receptors in the ON-bipolar cells. In terms of biological role, constitutively open nonselective divalent cation-conducting channels which mediate the influx of Ca(2+), Mg(2+), Mn(2+), Ba(2+), and Ni(2+) into the cytoplasm, leading to membrane depolarization. Impermeable to zinc ions. In addition, forms heteromultimeric ion channels with TRPM3 which are permeable for calcium and zinc ions. Plays an essential role for the depolarizing photoresponse of retinal ON bipolar cells. In the dark, tonic release of glutamate activates the G-protein coupled receptor for glutamate GRM6, its activation induces the release of G(o) protein and the beta-gamma G protein dimer. Both subunits can interact and inactivate the TRPM1 channel. A light onset, induces decrease in glutamate release and deactivation of GRM6 leading to channel opening and membrane depolarization. May play a role in metastasis suppression. The protein is Transient receptor potential cation channel subfamily M member 1 of Rattus norvegicus (Rat).